Consider the following 229-residue polypeptide: Ribonuclease 3 (229 aa).

Residues 4-133 (WEELQESVGF…FIGALYLDNG (130 aa)) form the RNase III domain. Residue Glu46 coordinates Mg(2+). Asp50 is an active-site residue. 2 residues coordinate Mg(2+): Asp119 and Glu122. Glu122 is an active-site residue. One can recognise a DRBM domain in the interval 159–228 (DYKTQLQEIV…AQFAINQLTH (70 aa)).

The protein belongs to the ribonuclease III family. Homodimer. Requires Mg(2+) as cofactor.

It localises to the cytoplasm. The catalysed reaction is Endonucleolytic cleavage to 5'-phosphomonoester.. Its function is as follows. Digests double-stranded RNA. Involved in the processing of primary rRNA transcript to yield the immediate precursors to the large and small rRNAs (23S and 16S). Processes some mRNAs, and tRNAs when they are encoded in the rRNA operon. Processes pre-crRNA and tracrRNA of type II CRISPR loci if present in the organism. This is Ribonuclease 3 from Listeria innocua serovar 6a (strain ATCC BAA-680 / CLIP 11262).